The chain runs to 611 residues: Protein KINASE OF THE OUTER CHLOROPLAST MEMBRANE 1 (611 aa).

Topologically, residues 1–555 are cytoplasmic; the sequence is MASKIIAGKP…LEDFHWAVRP (555 aa). One can recognise a Protein kinase domain in the interval 39–306; it reads LKLRHRIGRG…TDILLVLKSL (268 aa). Residues 45-53 and lysine 74 contribute to the ATP site; that span reads IGRGPFGDV. Residues 556 to 572 form a helical membrane-spanning segment; the sequence is LLIAMGLLTAMKLGICV. Over 573-611 the chain is Chloroplast intermembrane; it reads RKKIGRSKDGKQRDGSTGQGDCKIPDGKGSDKSKWLVFF. The interval 579–606 is disordered; that stretch reads SKDGKQRDGSTGQGDCKIPDGKGSDKSK. Basic and acidic residues predominate over residues 595-606; it reads KIPDGKGSDKSK.

This sequence belongs to the protein kinase superfamily. Ser/Thr protein kinase family. In terms of assembly, associates with the TOC complex containing, at least, translocons at the chloroplast envelope (e.g. TOCs and TICs such as TOC159, TOC75, TOC33 and TIC56).

Its subcellular location is the plastid. It is found in the chloroplast outer membrane. It catalyses the reaction L-seryl-[protein] + ATP = O-phospho-L-seryl-[protein] + ADP + H(+). The enzyme catalyses L-threonyl-[protein] + ATP = O-phospho-L-threonyl-[protein] + ADP + H(+). Serine/threonine protein kinase acting as a regulatory component of the plastid protein import machinery by phosphorylating import receptors (e.g. the A-domain of TOC159, TOC120 and TOC132). Supports preprotein import and contributes to efficient chloroplast biogenesis, thus being required for survival during de-etiolation. The polypeptide is Protein KINASE OF THE OUTER CHLOROPLAST MEMBRANE 1 (Arabidopsis thaliana (Mouse-ear cress)).